A 48-amino-acid chain; its full sequence is Large ribosomal subunit protein eL40 (48 aa).

The protein belongs to the eukaryotic ribosomal protein eL40 family.

This is Large ribosomal subunit protein eL40 from Methanoculleus marisnigri (strain ATCC 35101 / DSM 1498 / JR1).